A 284-amino-acid polypeptide reads, in one-letter code: Genome polyprotein (284 aa).

Disordered regions lie at residues histidine 16–glycine 57 and glycine 255–methionine 284. Residues glutamate 35–serine 44 show a composition bias toward polar residues.

Belongs to the potyviridae genome polyprotein family. In terms of processing, genome polyprotein of potyviruses undergoes post-translational proteolytic processing by the main proteinase NIa-pro resulting in the production of at least ten individual proteins. The P1 proteinase and the HC-pro cleave only their respective C-termini autocatalytically. 6K1 is essential for proper proteolytic separation of P3 from CI.

The protein resides in the virion. It carries out the reaction RNA(n) + a ribonucleoside 5'-triphosphate = RNA(n+1) + diphosphate. An RNA-dependent RNA polymerase that plays an essential role in the virus replication. In terms of biological role, involved in aphid transmission, cell-to-cell and systemis movement, encapsidation of the viral RNA and in the regulation of viral RNA amplification. The sequence is that of Genome polyprotein from Capsicum (peppers).